The sequence spans 155 residues: Gas vesicle protein K (155 aa).

Belongs to the gas vesicle GvpK family.

It localises to the gas vesicle. Might be involved in nucleating gas vesicle formation. Gas vesicles (GV) are hollow, gas filled proteinaceous nanostructures. During planktonic growth they allow positioning of the organism at a favorable depth for light or nutrient acquisition. Its function is as follows. Cluster expression in E.coli (gvpA1-gvpA2-gvpC-gvpN-gvpJ-gvpK-gvpF-gvpG-gvpV-gvpW) allows cells to float and produces irregularly shaped gas vesicles. The polypeptide is Gas vesicle protein K (Nostoc sp. (strain PCC 7120 / SAG 25.82 / UTEX 2576)).